We begin with the raw amino-acid sequence, 201 residues long: tRNA (guanine-N(7)-)-methyltransferase (201 aa).

S-adenosyl-L-methionine is bound by residues glutamate 33, glutamate 58, aspartate 85, and aspartate 106. The active site involves aspartate 106. Residues lysine 110, aspartate 142, and 180–183 each bind substrate; that span reads TTYE.

The protein belongs to the class I-like SAM-binding methyltransferase superfamily. TrmB family.

It catalyses the reaction guanosine(46) in tRNA + S-adenosyl-L-methionine = N(7)-methylguanosine(46) in tRNA + S-adenosyl-L-homocysteine. Its pathway is tRNA modification; N(7)-methylguanine-tRNA biosynthesis. Catalyzes the formation of N(7)-methylguanine at position 46 (m7G46) in tRNA. The sequence is that of tRNA (guanine-N(7)-)-methyltransferase from Mesomycoplasma hyopneumoniae (strain 232) (Mycoplasma hyopneumoniae).